The sequence spans 412 residues: Alanyl-tRNA editing protein Aarsd1-B (412 aa).

Residues histidine 108, histidine 112, cysteine 208, and histidine 212 each contribute to the Zn(2+) site.

It belongs to the class-II aminoacyl-tRNA synthetase family. Alax-L subfamily. It depends on Zn(2+) as a cofactor.

It localises to the cytoplasm. Its function is as follows. Functions in trans to edit the amino acid moiety from incorrectly charged tRNA(Ala). This is Alanyl-tRNA editing protein Aarsd1-B (aarsd1-b) from Xenopus laevis (African clawed frog).